Here is an 89-residue protein sequence, read N- to C-terminus: MSSIDKTMKFNFSEEPFDQDIKEILMTVHESLQEKGYNPINQIVGYLLSGDPAYIPRYNDARNLIRKVERDEVIEELVKFYLEQNRETK.

Belongs to the UPF0297 family.

This chain is UPF0297 protein OB2008, found in Oceanobacillus iheyensis (strain DSM 14371 / CIP 107618 / JCM 11309 / KCTC 3954 / HTE831).